The chain runs to 156 residues: MPRRRVVGQRKILPDPKFGSELLAKFVNVVMVDGKKSVSEAIVYGALDIIATKSGKDHLAVFEEALDNIRPAVEVKSRRVGGATYQVPVEVRPVRRNALAMRWLVDAARKRGEKSMAQRLAGELLDAADNKGSSVKKREDVHRMAEANKAFAHFRW.

This sequence belongs to the universal ribosomal protein uS7 family. As to quaternary structure, part of the 30S ribosomal subunit. Contacts proteins S9 and S11.

Functionally, one of the primary rRNA binding proteins, it binds directly to 16S rRNA where it nucleates assembly of the head domain of the 30S subunit. Is located at the subunit interface close to the decoding center, probably blocks exit of the E-site tRNA. The protein is Small ribosomal subunit protein uS7 of Aeromonas salmonicida (strain A449).